Reading from the N-terminus, the 891-residue chain is UPF0182 protein Glov_0814 (891 aa).

7 helical membrane passes run 6–26 (LTPILFALFIIVPALTYLLAY), 51–71 (GIGVLFGGLLFAFLVPNLLYA), 102–122 (IGVLIAAGIALFVGQFGALQW), 164–184 (FMLLATLLVTLLVYYIRGGIA), 202–222 (ILLALFSCVIAAGFYLEGFGL), 244–264 (TLTTLAFITPVAGLLLAFGLW), and 266–286 (GTWRLVLLPPIVVVAAYMIGM).

The protein belongs to the UPF0182 family.

It is found in the cell membrane. The polypeptide is UPF0182 protein Glov_0814 (Trichlorobacter lovleyi (strain ATCC BAA-1151 / DSM 17278 / SZ) (Geobacter lovleyi)).